The following is a 68-amino-acid chain: Protein P33 (68 aa).

Residues 34–63 (IVNLQGRIAELEARETEMLARVDTLIARLA) adopt a coiled-coil conformation.

In terms of biological role, assembly protein. The sequence is that of Protein P33 (XXXIII) from Acinetobacter calcoaceticus (Arthrobacter siderocapsulatus).